The chain runs to 523 residues: MAAEREPPPLGDGKPTDFEDLEDGEDLFTSTVSTLESSPSSPEPASLPAEDISANSNGPKPTEVGLDDDREDLFAEATEEVSLDSPEREPILSSEPSPAVTPVTPTTLIAPRIESKSMSAPVIFDRSREEIEEEANGDIFDIEIGVSDPEKVGDGMNAYMAYRVTTKTSLSMFSKSEFSVKRRFSDFLGLHSKLASKYLHVGYIVPPAPEKSIVGMTKVKVGKEDSSSTEFVEKRRAALERYLQRTVKHPTLLQDPDLRQFLESSELPRAVNTQALSGAGILRMVNKAADAVNKMTIKMNESDAWFEEKQQQFENLDQQLRKLHASVEALVCHRKELSANTAAFAKSAAMLGNSEDHTALSRALSQLAEVEEKIDQLHQEQAFADFYMFSELLSDYIRLIAAVKGVFDHRMKCWQKWEDAQITLLKKREAEAKMMVANKPDKIQQAKNEIREEIEEWEAKVQQGERDFEQISKTIRKEVGRFEKERVKDFKTVIIKYLESLVQTQQQLIKYWEAFLPEAKAIA.

A disordered region spans residues 1–104 (MAAEREPPPL…EPSPAVTPVT (104 aa)). Composition is skewed to low complexity over residues 27-50 (LFTSTVSTLESSPSSPEPASLPAE) and 93-104 (SSEPSPAVTPVT). A Phosphoserine modification is found at Ser-97. 2 positions are modified to phosphothreonine: Thr-101 and Thr-104. Phosphoserine is present on residues Ser-117 and Ser-119. The 130-residue stretch at 140-269 (FDIEIGVSDP…QFLESSELPR (130 aa)) folds into the PX domain. A 1,2-diacyl-sn-glycero-3-phospho-(1D-myo-inositol-3-phosphate) is bound by residues Arg-183, Ser-185, Lys-211, and Arg-235. Ser-185 carries the phosphoserine modification. Residues 260–523 (QFLESSELPR…AFLPEAKAIA (264 aa)) form an interaction with RhoG region. At Ser-277 the chain carries Phosphoserine. The interval 278–295 (GAGILRMVNKAADAVNKM) is membrane-binding amphipathic helix. The 225-residue stretch at 299–523 (MNESDAWFEE…AFLPEAKAIA (225 aa)) folds into the BAR domain. Lys-473 bears the N6-acetyllysine mark.

It belongs to the sorting nexin family. In terms of assembly, predominantly forms heterodimers with BAR domain-containing sorting nexins SNX5, SNX6 and SNX32; can self-associate to form homodimers. The heterodimers are proposed to self-assemble into helical arrays on the membrane to stabilize and expand local membrane curvature underlying endosomal tubule formation. Thought to be a component of the originally described retromer complex (also called SNX-BAR retromer) which is a pentamer containing the heterotrimeric retromer cargo-selective complex (CSC), also described as vacuolar protein sorting subcomplex (VPS), and a heterodimeric membrane-deforming subcomplex formed between SNX1 or SNX2 and SNX5 or SNX6 (also called SNX-BAR subcomplex); the respective CSC and SNX-BAR subcomplexes associate with low affinity. Interacts with SNX5, SNX6, SNX32, VPS26A, VPS29, VPS35, FNBP1, KALRN, RHOG (GDP-bound form).

The protein localises to the early endosome membrane. It is found in the cell projection. The protein resides in the lamellipodium. Functionally, involved in several stages of intracellular trafficking. Interacts with membranes containing phosphatidylinositol 3-phosphate (PtdIns(3P)) or phosphatidylinositol 3,5-bisphosphate (PtdIns(3,5)P2). Acts in part as component of the retromer membrane-deforming SNX-BAR subcomplex. The SNX-BAR retromer mediates retrograde transport of cargo proteins from endosomes to the trans-Golgi network (TGN) and is involved in endosome-to-plasma membrane transport for cargo protein recycling. The SNX-BAR subcomplex functions to deform the donor membrane into a tubular profile called endosome-to-TGN transport carrier (ETC). Can sense membrane curvature and has in vitro vesicle-to-membrane remodeling activity. Required for retrograde endosome-to-TGN transport of TGN38. Promotes KALRN- and RHOG-dependent but retromer-independent membrane remodeling such as lamellipodium formation; the function is dependent on GEF activity of KALRN. In Macaca fascicularis (Crab-eating macaque), this protein is Sorting nexin-2 (SNX2).